The following is an 87-amino-acid chain: UPF0335 protein Meso_3367 (87 aa).

This sequence belongs to the UPF0335 family.

This is UPF0335 protein Meso_3367 from Chelativorans sp. (strain BNC1).